The chain runs to 20 residues: Cytochrome P450 3A5 (20 aa).

Belongs to the cytochrome P450 family. Heme is required as a cofactor.

The protein localises to the endoplasmic reticulum membrane. It localises to the microsome membrane. The catalysed reaction is an organic molecule + reduced [NADPH--hemoprotein reductase] + O2 = an alcohol + oxidized [NADPH--hemoprotein reductase] + H2O + H(+). In terms of biological role, 6-beta-testosterone hydroxylase. This Papio sp. (Baboon) protein is Cytochrome P450 3A5.